Here is a 235-residue protein sequence, read N- to C-terminus: MSIHIGAKEGQIAETILLPGDPLRAKFIAETFLENPVCYNEVRGMLGYTGTYKGKKISVQGTGMGVPSISIYVNELIRDYGVKNLIRVGTAGGMQEDIKVRDLVLAMSSHTDSAINKVRFNGLDFAPTASFKLLKAAYDTAVEKGYSPKVGSVFTADSFYNDNPEAWKQWAKFGTLAVEMETAALYTLAAKYGVNALTILTISDHLITAEETTSEERQTTFTKMMEVALDAAITL.

H4 contacts a purine D-ribonucleoside. Phosphate-binding positions include G20, R24, R43, and 87-90; that span reads RVGT. A purine D-ribonucleoside is bound by residues 179 to 181 and 203 to 204; these read EME and SD. The Proton donor role is filled by D204.

This sequence belongs to the PNP/UDP phosphorylase family. Homohexamer; trimer of homodimers.

The enzyme catalyses a purine D-ribonucleoside + phosphate = a purine nucleobase + alpha-D-ribose 1-phosphate. It carries out the reaction a purine 2'-deoxy-D-ribonucleoside + phosphate = a purine nucleobase + 2-deoxy-alpha-D-ribose 1-phosphate. Functionally, catalyzes the reversible phosphorolytic breakdown of the N-glycosidic bond in the beta-(deoxy)ribonucleoside molecules, with the formation of the corresponding free purine bases and pentose-1-phosphate. The protein is Purine nucleoside phosphorylase DeoD-type of Clostridium perfringens (strain ATCC 13124 / DSM 756 / JCM 1290 / NCIMB 6125 / NCTC 8237 / Type A).